The sequence spans 569 residues: MRIFSLALGFLPLVAGHTLMTTLYVDGENQGDGVCIRMNRNAEKATFPISPLANDAMACGYDGEIAAARTCAVSQSSTLTFEFRAYPDGSQPGSIDGSHKGPCAVYMKPVANATSDNNAAGDGWFKIYELDYDSSTSQWCTEKLIANNGFLSVQIPEGLRGGDYLVRTELLALHAAQDSPPDPQFYVGCAQVFLEGSESGDVPEGVVIDASTYSLDVPGLTYNIYTEPLELPYPSFGPSVYQPNASASTENAKVSGTQATQKDGLQPEGCILVRDDWCGYEVSSYSDEAGCWAECWTQADECWGTYLPTGNKNCQIWQDKCTEIDTQCSAGNWNGPPNKGKVLTPELEGVGGSMKVFSGGVSSADSEGSGSGIDEAETEMNTSQGAAFTSTPAAETAVAADATATATATTEDAEATTAAEAAATSGAGRPGRGHGHGRGPEVYADITVYDDNDHLSNIRPVISCCKVNLGPNDSFLRAARFAPIFSGSHGLRIDYSDTHYWLIAWPVNVVSFDQCLPQPQGSAPETSRTAIHLFAFSRAALSPYTCYLHLHIIEFTISAAFDQNDAEES.

The first 16 residues, 1 to 16 (MRIFSLALGFLPLVAG), serve as a signal peptide directing secretion. Residues H17 and H99 each contribute to the Cu(2+) site. A disulfide bond links C59 and C189. The N-linked (GlcNAc...) asparagine glycan is linked to N112. 2 residues coordinate O2: H174 and Q184. Position 186 (Y186) interacts with Cu(2+). N-linked (GlcNAc...) asparagine glycans are attached at residues N244 and N381. The span at 399-424 (AADATATATATTEDAEATTAAEAAAT) shows a compositional bias: low complexity. The tract at residues 399–439 (AADATATATATTEDAEATTAAEAAATSGAGRPGRGHGHGRG) is disordered. N-linked (GlcNAc...) asparagine glycosylation is present at N472.

Belongs to the polysaccharide monooxygenase AA9 family. Cu(2+) is required as a cofactor.

The protein resides in the secreted. The enzyme catalyses [(1-&gt;4)-beta-D-glucosyl]n+m + reduced acceptor + O2 = 4-dehydro-beta-D-glucosyl-[(1-&gt;4)-beta-D-glucosyl]n-1 + [(1-&gt;4)-beta-D-glucosyl]m + acceptor + H2O.. Lytic polysaccharide monooxygenase (LPMO) that depolymerizes crystalline and amorphous polysaccharides via the oxidation of scissile alpha- or beta-(1-4)-glycosidic bonds, yielding C4 oxidation products. Catalysis by LPMOs requires the reduction of the active-site copper from Cu(II) to Cu(I) by a reducing agent and H(2)O(2) or O(2) as a cosubstrate. The chain is AA9 family lytic polysaccharide monooxygenase A from Emericella nidulans (strain FGSC A4 / ATCC 38163 / CBS 112.46 / NRRL 194 / M139) (Aspergillus nidulans).